A 515-amino-acid polypeptide reads, in one-letter code: 2-isopropylmalate synthase (515 aa).

The 263-residue stretch at Val5 to His267 folds into the Pyruvate carboxyltransferase domain. Mn(2+) is bound by residues Asp14, His202, His204, and Asn238. The tract at residues Lys392–Val515 is regulatory domain.

The protein belongs to the alpha-IPM synthase/homocitrate synthase family. LeuA type 1 subfamily. In terms of assembly, homodimer. The cofactor is Mn(2+).

Its subcellular location is the cytoplasm. The enzyme catalyses 3-methyl-2-oxobutanoate + acetyl-CoA + H2O = (2S)-2-isopropylmalate + CoA + H(+). It participates in amino-acid biosynthesis; L-leucine biosynthesis; L-leucine from 3-methyl-2-oxobutanoate: step 1/4. Functionally, catalyzes the condensation of the acetyl group of acetyl-CoA with 3-methyl-2-oxobutanoate (2-ketoisovalerate) to form 3-carboxy-3-hydroxy-4-methylpentanoate (2-isopropylmalate). The sequence is that of 2-isopropylmalate synthase from Vibrio parahaemolyticus serotype O3:K6 (strain RIMD 2210633).